Reading from the N-terminus, the 187-residue chain is Serine/arginine-rich splicing factor RSZ21 (187 aa).

The RRM domain maps to 2–73 (TRVYVGNLDP…WRVELSHKDK (72 aa)). Disordered stretches follow at residues 68 to 89 (LSHKDKGGRGGGGGRRGGIEDS) and 105 to 187 (RRGR…ANGV). The CCHC-type zinc finger occupies 89 to 106 (SKCYECGELGHFARECRR). Over residues 107–122 (GRGSVRRRSPSPRRRR) the composition is skewed to basic residues. Phosphoserine is present on residues Ser-123, Ser-132, Ser-134, Ser-140, Ser-146, and Ser-159. A compositionally biased stretch (basic residues) spans 136–155 (RGRRSPPRRRSVTPPRRGRS). A compositionally biased stretch (basic and acidic residues) spans 165 to 177 (SRRDSPRRRDSPY). A compositionally biased stretch (low complexity) spans 178 to 187 (GRRSPYANGV). Position 181 is a phosphoserine (Ser-181).

It belongs to the splicing factor SR family. RSZ subfamily. As to quaternary structure, component of the spliceosome. Interacts with SNRNP35, AFC2, CYP59, RS2Z33 and RNU1. Interacts with MOS14. Post-translationally, extensively phosphorylated on serine residues in the RS domain. Phosphorylated by AFC2. As to expression, expressed in roots, leaves, flowers and siliques.

Its subcellular location is the nucleus speckle. Probably involved in intron recognition and spliceosome assembly. This is Serine/arginine-rich splicing factor RSZ21 (RSZ21) from Arabidopsis thaliana (Mouse-ear cress).